The chain runs to 265 residues: NAD kinase 2 (265 aa).

Catalysis depends on aspartate 51, which acts as the Proton acceptor. NAD(+) contacts are provided by residues 51–52 (DG), 122–123 (NE), arginine 149, aspartate 151, 162–167 (TAYNKS), and alanine 186.

The protein belongs to the NAD kinase family. The cofactor is a divalent metal cation.

It is found in the cytoplasm. The enzyme catalyses NAD(+) + ATP = ADP + NADP(+) + H(+). Involved in the regulation of the intracellular balance of NAD and NADP, and is a key enzyme in the biosynthesis of NADP. Catalyzes specifically the phosphorylation on 2'-hydroxyl of the adenosine moiety of NAD to yield NADP. This is NAD kinase 2 from Bacillus licheniformis (strain ATCC 14580 / DSM 13 / JCM 2505 / CCUG 7422 / NBRC 12200 / NCIMB 9375 / NCTC 10341 / NRRL NRS-1264 / Gibson 46).